The sequence spans 643 residues: Phosphatidylinositol-3,5-bisphosphate 3-phosphatase MTMR2 (643 aa).

Residues 1-52 (MEKSSSCESLGAQLPAARLPSEDSLSSASTSHSENSVHTKSASAISSDSIST) form a disordered region. Residues Ser6 and Ser9 each carry the phosphoserine modification. A compositionally biased stretch (polar residues) spans 23–40 (DSLSSASTSHSENSVHTK). Positions 41–52 (SASAISSDSIST) are enriched in low complexity. Position 58 is a phosphoserine (Ser58). A GRAM domain is found at 68–139 (NKLAEMEEPA…GVISRVEKIG (72 aa)). Positions 205–580 (GWKLYDPLLE…RHLELWVGYY (376 aa)) constitute a Myotubularin phosphatase domain. Asn330, Asn355, and Ile356 together coordinate a 1,2-diacyl-sn-glycero-3-phospho-(1D-myo-inositol-3,5-bisphosphate). A 1,2-diacyl-sn-glycero-3-phospho-(1D-myo-inositol-3-phosphate)-binding residues include Asn330, Asn355, and Ile356. Catalysis depends on Cys417, which acts as the Phosphocysteine intermediate. Positions 418, 419, 420, 421, 422, 423, 459, and 463 each coordinate a 1,2-diacyl-sn-glycero-3-phospho-(1D-myo-inositol-3,5-bisphosphate). Positions 418, 419, 420, 421, 422, and 423 each coordinate a 1,2-diacyl-sn-glycero-3-phospho-(1D-myo-inositol-3-phosphate). An a 1,2-diacyl-sn-glycero-3-phospho-(1D-myo-inositol-3-phosphate)-binding site is contributed by Arg463. Residues 593 to 627 (IHSRYKELLAKRAELQRKVEELQREISNRSTSSSE) adopt a coiled-coil conformation. Residues 614 to 643 (LQREISNRSTSSSERASSPAQCVTPVQTVV) form a disordered region. The span at 620–631 (NRSTSSSERASS) shows a compositional bias: low complexity. Residues 632–643 (PAQCVTPVQTVV) show a composition bias toward polar residues.

This sequence belongs to the protein-tyrosine phosphatase family. Non-receptor class myotubularin subfamily. Homodimer (via coiled-coil domain). Heterotetramer consisting of one MTMR2 dimer and one SBF2/MTMR13 dimer; specifically in peripheral nerves stabilizes SBF2/MTMR13 at the membranes and increases MTMR2 catalytic activity towards phosphatidylinositol 3,5-bisphosphate and to a lesser extent towards phosphatidylinositol 3-phosphate. Heterodimer with SBF1/MTMR5; acts as an adapter for the phosphatase MTMR2 to regulate MTMR2 catalytic activity and subcellular location. Heterodimer with MTMR12. Post-translationally, phosphorylation at Ser-58 decreases MTMR2 localization to endocytic vesicular structures. Expressed in sciatic nerve and in Schwann cells (at protein level). Detected in adult dorsal root ganglia, neurons of the central nervous system, motor neurons, cell soma and neurites of sensory neurons, olfactory bulb, cerebellum and hippocampus.

The protein localises to the cytoplasm. Its subcellular location is the early endosome membrane. It is found in the perinuclear region. It localises to the cell projection. The protein resides in the axon. The protein localises to the endosome membrane. It catalyses the reaction a 1,2-diacyl-sn-glycero-3-phospho-(1D-myo-inositol-3,5-bisphosphate) + H2O = a 1,2-diacyl-sn-glycero-3-phospho-(1D-myo-inositol-5-phosphate) + phosphate. The enzyme catalyses a 1,2-diacyl-sn-glycero-3-phospho-(1D-myo-inositol-3-phosphate) + H2O = a 1,2-diacyl-sn-glycero-3-phospho-(1D-myo-inositol) + phosphate. It carries out the reaction 1,2-dioctanoyl-sn-glycero-3-phospho-(1-D-myo-inositol-3-phosphate) + H2O = 1,2-dioctanoyl-sn-glycero-3-phospho-(1D-myo-inositol) + phosphate. The catalysed reaction is 1,2-dioctanoyl-sn-glycero-3-phospho-(1D-myo-inositol-3,5-bisphosphate) + H2O = 1,2-dioctanoyl-sn-glycero-3-phospho-(1D-myo-inositol-5-phosphate) + phosphate. Functionally, lipid phosphatase that specifically dephosphorylates the D-3 position of phosphatidylinositol 3-phosphate and phosphatidylinositol 3,5-bisphosphate, generating phosphatidylinositol and phosphatidylinositol 5-phosphate. Regulates the level of these phosphoinositides critical for various biological processes including autophagy initiation and autophagosome maturation. In Mus musculus (Mouse), this protein is Phosphatidylinositol-3,5-bisphosphate 3-phosphatase MTMR2.